Consider the following 405-residue polypeptide: Formate-dependent phosphoribosylglycinamide formyltransferase (405 aa).

N(1)-(5-phospho-beta-D-ribosyl)glycinamide contacts are provided by residues 22–23 (EL) and glutamate 82. ATP-binding positions include arginine 115, lysine 162, 167-172 (SSGKGQ), 202-205 (EGFI), and glutamate 210. In terms of domain architecture, ATP-grasp spans 120–320 (RLAAETLGLA…EFELHARAIL (201 aa)). The Mg(2+) site is built by glutamate 279 and glutamate 291. N(1)-(5-phospho-beta-D-ribosyl)glycinamide contacts are provided by residues aspartate 298, lysine 367, and 374–375 (RR).

Belongs to the PurK/PurT family. As to quaternary structure, homodimer.

The catalysed reaction is N(1)-(5-phospho-beta-D-ribosyl)glycinamide + formate + ATP = N(2)-formyl-N(1)-(5-phospho-beta-D-ribosyl)glycinamide + ADP + phosphate + H(+). The protein operates within purine metabolism; IMP biosynthesis via de novo pathway; N(2)-formyl-N(1)-(5-phospho-D-ribosyl)glycinamide from N(1)-(5-phospho-D-ribosyl)glycinamide (formate route): step 1/1. In terms of biological role, involved in the de novo purine biosynthesis. Catalyzes the transfer of formate to 5-phospho-ribosyl-glycinamide (GAR), producing 5-phospho-ribosyl-N-formylglycinamide (FGAR). Formate is provided by PurU via hydrolysis of 10-formyl-tetrahydrofolate. The protein is Formate-dependent phosphoribosylglycinamide formyltransferase of Delftia acidovorans (strain DSM 14801 / SPH-1).